Reading from the N-terminus, the 199-residue chain is Cytosine-containing mismatch-binding protein 1 (199 aa).

Positions 123–197 (PKKPSSAFIL…QYDKFMKEAG (75 aa)) form a DNA-binding region, HMG box.

Monomer.

Its subcellular location is the nucleus. Functionally, binds to cytosines in base mismatches and opposite chemically altered guanines. May be involved in repair of DNA damage. The sequence is that of Cytosine-containing mismatch-binding protein 1 from Schizosaccharomyces pombe (strain 972 / ATCC 24843) (Fission yeast).